Reading from the N-terminus, the 547-residue chain is MPTDLHAWNALLRHHDTLRDAQMRDWFDREGAQRVAQCSLEAAGLYLDYSKNRITPQTMSLLMQLAAEAGVTRRRDAMFAGEHINTTEDRAVLHVALRAPAGAAFKVDGEAVVPAIHQVLARMRDFSARVRSGAWKGATGERITDVINIGIGGSDLGPRMVCRALSHLADADGHAAPRMHFVSNVDGTDLAETLVRLDPQRTLVIVCSKTFTTLETMANARSARAWFVASGVAEQDLAKHFVAVSTNTEAVREFGIDPANMFEFWDWIGGRFSLWSSVGLSITLAVGFDAFSDLLAGGHAMDEHFRTAPLERNMPVILGMLGVWYRNFWNLPTSCMAPYSTSLELFPAFLQQLEMESNGKSVQLDGQRIRTHTSPVVWGTAGTNGQHAYFQQIHQGSQVVPVDFVAPLVPPRRLPGHHAKLLANCFAQAEALMRGRSADELRASGLKDEVRIAHMVFDGNRPSNTLLMEDLTPNVLGALIALYEHRTFVQGVVWRINSFDQWGVELGKILARPIEAELTGTATGQHDASTAALIARARAVLKAGAAS.

The active-site Proton donor is E356. Residues H387 and K508 contribute to the active site.

The protein belongs to the GPI family.

Its subcellular location is the cytoplasm. The catalysed reaction is alpha-D-glucose 6-phosphate = beta-D-fructose 6-phosphate. It participates in carbohydrate biosynthesis; gluconeogenesis. The protein operates within carbohydrate degradation; glycolysis; D-glyceraldehyde 3-phosphate and glycerone phosphate from D-glucose: step 2/4. Its function is as follows. Catalyzes the reversible isomerization of glucose-6-phosphate to fructose-6-phosphate. This Cupriavidus taiwanensis (strain DSM 17343 / BCRC 17206 / CCUG 44338 / CIP 107171 / LMG 19424 / R1) (Ralstonia taiwanensis (strain LMG 19424)) protein is Glucose-6-phosphate isomerase.